The following is a 295-amino-acid chain: G1/S-specific cyclin-D1 (295 aa).

The 125-residue stretch at 28–152 folds into the Cyclin N-terminal domain; that stretch reads LRAMLKAEET…LLVNKLKWNL (125 aa). The segment at 262 to 295 is disordered; the sequence is AQQNMDPKAAEEEEEEEEEVDLACTPTDVRDVDI. Lysine 269 participates in a covalent cross-link: Glycyl lysine isopeptide (Lys-Gly) (interchain with G-Cter in ubiquitin). Residues 272–282 show a composition bias toward acidic residues; sequence EEEEEEEEEVD. Threonine 286 is modified (phosphothreonine).

Belongs to the cyclin family. Cyclin D subfamily. In terms of assembly, interacts with either CDK4 or CDK6 protein kinase to form a serine/threonine kinase holoenzyme complex. The cyclin subunit imparts substrate specificity to the complex. Component of the ternary complex CCND1/CDK4/CDKN1B required for nuclear translocation and modulation of CDK4-mediated kinase activity. Interacts directly with CDKN1B. Can form similar complexes with either CDKN1A or CDKN2A. Interacts with UHRF2; the interaction ubiquitinates CCND1 and appears to occur independently of phosphorylation. Interacts with USP2. Interacts (via cyclin N-terminal domain) with INSM1 (via N-terminal region); the interaction competes with the binding of CCND1 to CDK4 during cell cycle progression and inhibits CDK4 activity. Interacts with CDK4; the interaction is prevented with the binding of CCND1 to INSM1 during cell cycle progression. In terms of processing, phosphorylation at Thr-286 by MAP kinases is required for ubiquitination and degradation by the DCX(AMBRA1) complex. It also plays an essential role for recognition by the FBXO31 component of SCF (SKP1-cullin-F-box) protein ligase complex following DNA damage. Ubiquitinated at Lys-269 by the DCX(AMBRA1) complex during the transition from G1 to S cell phase, leading to its degradation: ubiquitination is dependent on Thr-286 phosphorylation. The DCX(AMBRA1) complex represents the major regulator of CCND1 stability during the G1/S transition. Also ubiquitinated by the SCF(FBXO4) and Cul7-RING(FBXW8) ubiquitin-protein ligase complexes. Following DNA damage it is ubiquitinated by the SCF(FBXO31) protein ligase complex. SCF(FBXO31) ubiquitination is dependent on Thr-286 phosphorylation. Ubiquitinated also by UHRF2 apparently in a phosphorylation-independent manner. Ubiquitination leads to its degradation and G1 arrest. Deubiquitinated by USP2; leading to its stabilization.

It localises to the nucleus. Its subcellular location is the cytoplasm. The protein localises to the nucleus membrane. Its function is as follows. Regulatory component of the cyclin D1-CDK4 (DC) complex that phosphorylates and inhibits members of the retinoblastoma (RB) protein family including RB1 and regulates the cell-cycle during G(1)/S transition. Phosphorylation of RB1 allows dissociation of the transcription factor E2F from the RB/E2F complex and the subsequent transcription of E2F target genes which are responsible for the progression through the G(1) phase. Hypophosphorylates RB1 in early G(1) phase. Cyclin D-CDK4 complexes are major integrators of various mitogenenic and antimitogenic signals. Also a substrate for SMAD3, phosphorylating SMAD3 in a cell-cycle-dependent manner and repressing its transcriptional activity. Component of the ternary complex, cyclin D1/CDK4/CDKN1B, required for nuclear translocation and activity of the cyclin D-CDK4 complex. Exhibits transcriptional corepressor activity with INSM1 on the NEUROD1 and INS promoters in a cell cycle-independent manner. In Homo sapiens (Human), this protein is G1/S-specific cyclin-D1.